A 484-amino-acid chain; its full sequence is Probable chitinase 2 (484 aa).

Positions 1 to 33 (MTLRSRLSGEAPQLWLLLLLASTASSLWASVAA) are cleaved as a signal peptide. In terms of domain architecture, GH18 spans 41–432 (KVVVCYVSTW…RTINEATMLA (392 aa)). C45 and C70 are joined by a disulfide. Chitin is bound by residues 98–99 (EE) and 125–128 (GGWN). The active-site Proton donor is the E168. Chitin is bound by residues Y169, 231–234 (MCYD), and W384. S467 is modified (phosphoserine).

It belongs to the glycosyl hydrolase 18 family. Chitinase class II subfamily.

The enzyme catalyses Random endo-hydrolysis of N-acetyl-beta-D-glucosaminide (1-&gt;4)-beta-linkages in chitin and chitodextrins.. The polypeptide is Probable chitinase 2 (Drosophila melanogaster (Fruit fly)).